We begin with the raw amino-acid sequence, 442 residues long: Elongation factor 1-gamma (442 aa).

The GST N-terminal domain occupies 2-87; it reads AAGTLYTYPE…YLSNDVLRGS (86 aa). The 129-residue stretch at 88–216 folds into the GST C-terminal domain; sequence TPQASAQVLQ…VKLCEKMAQF (129 aa). Composition is skewed to basic and acidic residues over residues 227–242 and 249–263; these read KKEAPIKKEKGGKEGG and QEKKEKKKEEKKAAP. The interval 227 to 273 is disordered; the sequence is KKEAPIKKEKGGKEGGKQQPQQQEKKEKKKEEKKAAPAEEEMDECEA. The EF-1-gamma C-terminal domain maps to 281–442; the sequence is AKDPFAHLPK…KPFNQGKIFK (162 aa).

EF-1 is composed of four subunits: alpha, beta, delta, and gamma.

In terms of biological role, probably plays a role in anchoring the complex to other cellular components. The sequence is that of Elongation factor 1-gamma (eef1g) from Danio rerio (Zebrafish).